The primary structure comprises 257 residues: Leucine-rich repeat-containing protein 3 (257 aa).

The N-terminal stretch at 1–32 (MGTVRPPRPSLLLVSTRESCLFLLFCLHLGAA) is a signal peptide. Residues 33-64 (CPQPCRCPDHAGAVAVFCSLRGLQEVPEDIPA) form the LRRNT domain. LRR repeat units lie at residues 65-86 (NTVL…AFQH), 89-110 (RLRE…TFAG), 114-135 (GLRL…ALGK), and 136-157 (LSAK…QEAL). The chain crosses the membrane as a helical span at residues 205 to 225 (VAMLVTMFGWFAMVIAYVVYY).

It belongs to the LRRC3 family. As to expression, widely expressed; detected in testis, lung, small intestine, breast, brain, heart, bone marrow, placenta, colon, fetal brain, liver, fetal liver, thymus, salivary gland, spinal cord, spleen, trachea and adrenal gland.

Its subcellular location is the membrane. The chain is Leucine-rich repeat-containing protein 3 (LRRC3) from Homo sapiens (Human).